A 1323-amino-acid chain; its full sequence is Sister chromatid cohesion protein PDS5 homolog A-A (1323 aa).

An HEAT repeat occupies 385-421 (FLVNDQLLGFVRERTLDKRWRVRKEAMMGLAQLYKKY). Residues 1139–1323 (LNATGRRPYS…TAQRQIDLHR (185 aa)) form a disordered region. Over residues 1153–1165 (SEISNNVSINSES) the composition is skewed to low complexity. 2 stretches are compositionally biased toward polar residues: residues 1166 to 1176 (DASVANRQSSE) and 1210 to 1220 (LDQTAPSNTGT). The span at 1235–1246 (NIRKESEEKKAD) shows a compositional bias: basic and acidic residues.

As to quaternary structure, interacts with the cohesin complex. Binds chromatin in a cohesin-dependent manner.

The protein resides in the nucleus. Its function is as follows. May regulate sister chromatid cohesion during mitosis and couple it to DNA replication. The chain is Sister chromatid cohesion protein PDS5 homolog A-A (pds5a-a) from Xenopus laevis (African clawed frog).